A 271-amino-acid chain; its full sequence is Ribosomal RNA small subunit methyltransferase A (271 aa).

Residues Leu20, Gly45, Glu66, Asp90, and Asn112 each coordinate S-adenosyl-L-methionine.

This sequence belongs to the class I-like SAM-binding methyltransferase superfamily. rRNA adenine N(6)-methyltransferase family. RsmA subfamily.

It localises to the cytoplasm. It catalyses the reaction adenosine(1518)/adenosine(1519) in 16S rRNA + 4 S-adenosyl-L-methionine = N(6)-dimethyladenosine(1518)/N(6)-dimethyladenosine(1519) in 16S rRNA + 4 S-adenosyl-L-homocysteine + 4 H(+). In terms of biological role, specifically dimethylates two adjacent adenosines (A1518 and A1519) in the loop of a conserved hairpin near the 3'-end of 16S rRNA in the 30S particle. May play a critical role in biogenesis of 30S subunits. In Blochmanniella floridana, this protein is Ribosomal RNA small subunit methyltransferase A.